The primary structure comprises 592 residues: Craniofacial development protein 2 (592 aa).

Residues 1–16 are compositionally biased toward basic and acidic residues; that stretch reads MEEFDSKDISTSKDED. Disordered regions lie at residues 1–225 and 499–592; these read MEEF…KGQS and VTNE…DCNN. The segment covering 25 to 42 has biased composition (acidic residues); sequence HEDDINELVKEDEVDGEE. 2 stretches are compositionally biased toward basic and acidic residues: residues 78–108 and 147–162; these read SRESGGRIIEKEDAAAEQEKGAESEDARQEE and KVEELEKPKKAEEVKL. A compositionally biased stretch (polar residues) spans 175–184; the sequence is LTQQGRLSGR. Basic and acidic residues-rich tracts occupy residues 185–207, 508–523, 552–562, and 580–592; these read TSEDEPRRSEGVQHATGEERRAD, EEAKSVLKQNEKEKPE, SVFKQDEKDKP, and EKCDLEKKKDCNN. Residues 499 to 578 form a hydrophilic region; the sequence is VTNEEDATNE…SVPSLPAGSG (80 aa).

In terms of processing, phosphorylated by CK2 (casein kinase II) in vitro. Expressed in liver and lung with higher expression in brain.

The protein resides in the cytoplasm. It is found in the nucleus. The chain is Craniofacial development protein 2 (CFDP2) from Bos taurus (Bovine).